The primary structure comprises 285 residues: ATP synthase gamma chain (285 aa).

This sequence belongs to the ATPase gamma chain family. As to quaternary structure, F-type ATPases have 2 components, CF(1) - the catalytic core - and CF(0) - the membrane proton channel. CF(1) has five subunits: alpha(3), beta(3), gamma(1), delta(1), epsilon(1). CF(0) has three main subunits: a, b and c.

The protein localises to the cell membrane. Produces ATP from ADP in the presence of a proton gradient across the membrane. The gamma chain is believed to be important in regulating ATPase activity and the flow of protons through the CF(0) complex. In Geobacillus sp. (strain WCH70), this protein is ATP synthase gamma chain.